A 222-amino-acid chain; its full sequence is Large ribosomal subunit protein uL4 (222 aa).

A disordered region spans residues 50 to 72 (TRGRSEVSHSTKKPFRQKGTGNA).

Belongs to the universal ribosomal protein uL4 family. As to quaternary structure, part of the 50S ribosomal subunit.

In terms of biological role, one of the primary rRNA binding proteins, this protein initially binds near the 5'-end of the 23S rRNA. It is important during the early stages of 50S assembly. It makes multiple contacts with different domains of the 23S rRNA in the assembled 50S subunit and ribosome. Forms part of the polypeptide exit tunnel. The sequence is that of Large ribosomal subunit protein uL4 from Chlamydia trachomatis serovar A (strain ATCC VR-571B / DSM 19440 / HAR-13).